A 352-amino-acid chain; its full sequence is Protein RecA (352 aa).

65–72 (GPESSGKT) is an ATP binding site.

Belongs to the RecA family.

It is found in the cytoplasm. In terms of biological role, can catalyze the hydrolysis of ATP in the presence of single-stranded DNA, the ATP-dependent uptake of single-stranded DNA by duplex DNA, and the ATP-dependent hybridization of homologous single-stranded DNAs. It interacts with LexA causing its activation and leading to its autocatalytic cleavage. This Pseudomonas fluorescens (strain SBW25) protein is Protein RecA.